Here is a 408-residue protein sequence, read N- to C-terminus: Multidrug resistance protein MdtG (408 aa).

Helical transmembrane passes span 16 to 36 (LIVA…VMPF), 58 to 78 (IVFS…GGLA), 92 to 112 (LGMG…QFLI), 115 to 135 (ALLG…ATQV), 146 to 166 (TLST…GLLA), 173 to 193 (PVFF…LFCI), 224 to 244 (LFVT…ILTL), 256 to 276 (VAFI…LSAP), 290 to 310 (ILIT…YVQT), 319 to 339 (FLLG…LVYN), and 378 to 398 (AVFL…WNSL).

The protein belongs to the major facilitator superfamily. DHA1 family. MdtG (TC 2.A.1.2.20) subfamily.

It localises to the cell inner membrane. Its function is as follows. Confers resistance to fosfomycin and deoxycholate. This chain is Multidrug resistance protein MdtG, found in Escherichia coli (strain 55989 / EAEC).